Here is a 108-residue protein sequence, read N- to C-terminus: Ig kappa chain V-V region HP 123E6 (108 aa).

The tract at residues 1 to 23 (DIQMTQSTSSLSASLGDRVTISC) is framework-1. An intrachain disulfide couples cysteine 23 to cysteine 88. The interval 24 to 34 (RASQDISNYLN) is complementarity-determining-1. Residues 35-49 (WYQQKPDGTVKLLIY) form a framework-2 region. The tract at residues 50 to 56 (YTSRLHS) is complementarity-determining-2. The interval 57–88 (GVPSRFSGSGSGTDYSLTISNLEQEDIATYFC) is framework-3. Residues 89–97 (QQGYMLPRT) are complementarity-determining-3. The segment at 98–108 (FGGGTKLEIKR) is framework-4.

The sequence is that of Ig kappa chain V-V region HP 123E6 from Mus musculus (Mouse).